A 465-amino-acid chain; its full sequence is Ribulose bisphosphate carboxylase large chain (465 aa).

K4 bears the N6,N6,N6-trimethyllysine mark. Residues N113 and T163 each contribute to the substrate site. The active-site Proton acceptor is K165. A substrate-binding site is contributed by K167. Positions 191, 193, and 194 each coordinate Mg(2+). K191 carries the N6-carboxylysine modification. The active-site Proton acceptor is the H284. Substrate contacts are provided by R285, H317, and S369.

Belongs to the RuBisCO large chain family. Type I subfamily. As to quaternary structure, heterohexadecamer of 8 large chains and 8 small chains; disulfide-linked. The disulfide link is formed within the large subunit homodimers. It depends on Mg(2+) as a cofactor. The disulfide bond which can form in the large chain dimeric partners within the hexadecamer appears to be associated with oxidative stress and protein turnover.

It is found in the plastid. Its subcellular location is the chloroplast. The enzyme catalyses 2 (2R)-3-phosphoglycerate + 2 H(+) = D-ribulose 1,5-bisphosphate + CO2 + H2O. It catalyses the reaction D-ribulose 1,5-bisphosphate + O2 = 2-phosphoglycolate + (2R)-3-phosphoglycerate + 2 H(+). RuBisCO catalyzes two reactions: the carboxylation of D-ribulose 1,5-bisphosphate, the primary event in carbon dioxide fixation, as well as the oxidative fragmentation of the pentose substrate in the photorespiration process. Both reactions occur simultaneously and in competition at the same active site. The polypeptide is Ribulose bisphosphate carboxylase large chain (Securidaca diversifolia (Easter flower)).